The sequence spans 253 residues: Solute carrier family 66 member 2 (253 aa).

Helical transmembrane passes span 7 to 27 (GWLL…AMVF), 49 to 69 (FSTY…LFWF), 72 to 92 (HFES…LLML), 125 to 145 (FADY…ITYL), 150 to 170 (ALFV…LGVP), and 214 to 234 (VCGL…YVFT). Residues 14–80 (HQLVSWGAAG…RHFESPLLWQ (67 aa)) enclose the PQ-loop 1 domain. In terms of domain architecture, PQ-loop 2 spans 160 to 215 (AVLTEAMLGVPQLYRNHRHQSTEGMSIKMVLMWTSGDTFKTAYFLLNGAPLQFSVC).

It is found in the membrane. This is Solute carrier family 66 member 2 (SLC66A2) from Bos taurus (Bovine).